A 249-amino-acid polypeptide reads, in one-letter code: Ditrans,polycis-undecaprenyl-diphosphate synthase ((2E,6E)-farnesyl-diphosphate specific) (249 aa).

The active site involves Asp-29. Residue Asp-29 coordinates Mg(2+). Residues 30–33 (GNGR), Trp-34, Arg-42, His-46, and 74–76 (STE) contribute to the substrate site. Asn-77 (proton acceptor) is an active-site residue. Substrate contacts are provided by residues Trp-78, Arg-80, Arg-197, and 203-205 (RLS). Glu-216 contributes to the Mg(2+) binding site.

It belongs to the UPP synthase family. As to quaternary structure, homodimer. It depends on Mg(2+) as a cofactor.

The catalysed reaction is 8 isopentenyl diphosphate + (2E,6E)-farnesyl diphosphate = di-trans,octa-cis-undecaprenyl diphosphate + 8 diphosphate. Functionally, generates ditrans,octacis-undecaprenyl pyrophosphate (UPP) from isopentenyl pyrophosphate (IPP) and farnesyl diphosphate. UPP is the precursor of glycosyl carrier lipid in the biosynthesis of bacterial cell wall polysaccharide components such as peptidoglycan and lipopolysaccharide. The sequence is that of Ditrans,polycis-undecaprenyl-diphosphate synthase ((2E,6E)-farnesyl-diphosphate specific) (uppS) from Micrococcus luteus (Micrococcus lysodeikticus).